The chain runs to 125 residues: uncharacterized protein (125 aa).

A Cupin type-2 domain is found at 45 to 110; sequence IVPVGSKTLL…IGNVPLKILC (66 aa).

This is an uncharacterized protein from Methanocaldococcus jannaschii (strain ATCC 43067 / DSM 2661 / JAL-1 / JCM 10045 / NBRC 100440) (Methanococcus jannaschii).